Reading from the N-terminus, the 361-residue chain is tRNA-specific 2-thiouridylase MnmA (361 aa).

ATP-binding positions include 8-15 (GMSGGVDS) and Met-34. Residues 94-96 (NPD) form an interaction with target base in tRNA region. Catalysis depends on Cys-99, which acts as the Nucleophile. Cys-99 and Cys-195 form a disulfide bridge. Position 123 (Gly-123) interacts with ATP. The tract at residues 145–147 (KDQ) is interaction with tRNA. The active-site Cysteine persulfide intermediate is Cys-195. Residues 307–308 (RY) form an interaction with tRNA region.

The protein belongs to the MnmA/TRMU family.

It localises to the cytoplasm. It carries out the reaction S-sulfanyl-L-cysteinyl-[protein] + uridine(34) in tRNA + AH2 + ATP = 2-thiouridine(34) in tRNA + L-cysteinyl-[protein] + A + AMP + diphosphate + H(+). Functionally, catalyzes the 2-thiolation of uridine at the wobble position (U34) of tRNA, leading to the formation of s(2)U34. This is tRNA-specific 2-thiouridylase MnmA from Legionella pneumophila (strain Lens).